The chain runs to 107 residues: uncharacterized protein (107 aa).

A signal peptide spans 1–18; it reads MRTLMLIILSILIYLSSA.

This is an uncharacterized protein from Caenorhabditis elegans.